The primary structure comprises 121 residues: Protein TusC (121 aa).

This sequence belongs to the DsrF/TusC family. Heterohexamer, formed by a dimer of trimers. The hexameric TusBCD complex contains 2 copies each of TusB, TusC and TusD. The TusBCD complex interacts with TusE.

It is found in the cytoplasm. In terms of biological role, part of a sulfur-relay system required for 2-thiolation of 5-methylaminomethyl-2-thiouridine (mnm(5)s(2)U) at tRNA wobble positions. The protein is Protein TusC of Yersinia pestis bv. Antiqua (strain Antiqua).